The sequence spans 647 residues: MAKVTDIVLWDKPGERVLLLGNHAIARGALEANIAVFAAYPGTPSSELTDTMAAVAKKAGVYMEYSTNEKVAFETALAAAWSGLRAMTAMKHVGLNVAADSFLSSVGMGVEGGFVIMVADDPSMWSSQNEQDTRVYAKFANVPVLEPSSPHEAKEMTKYAFELSEKFKHFVILRTTTRSSHARGDVVLGELPEEIKTGKRKFGKFKKDPTRFVDVPAHARKFHPLILEKIEKIREELNNCPFNWIEGKEDAKVGIIAPGLSYAYVKEALAWLGVEDVKILKLGTPFPVPYGLLGKFFDGLEKVLIVEELEPVVEEQVKTWAYDKGLRIPIHGKDLVPRVYEMTTRRAVEAIAKFLGLETPINFAEIDEKYEKVSQIVPPRPPSLCPACPHRNSFFAIRKAAGPKAIYPSDIGCYTLGVLPPLRTVDTTVAMGASIGIGHGLSIAMNGSLAEEEHKEGKEKQIIVATIGDSTFYHTGLPALANAIYNRSNVLIVVLDNLVTAMTGDQPNPGTGQTPHGMGKRIPIEDVAKAMGADFVAVVDPYDIKATYETIKKALEVEGVSVVVSRQVCALYKIGQMRRRGMKWPIYHVVEDKCTGCKICINAYGCPAIYWDPETKKAKVDPTMCWGCGGCAQVCPFDAFEPMKEGE.

2 4Fe-4S ferredoxin-type domains span residues P585–E614 and K616–E645. The [4Fe-4S] cluster site is built by C594, C597, C600, C606, C625, C628, C631, and C635.

In terms of assembly, heterodimer of the IorA and IorB subunits. [4Fe-4S] cluster serves as cofactor.

The enzyme catalyses indole-3-pyruvate + 2 oxidized [2Fe-2S]-[ferredoxin] + CoA = (indol-3-yl)acetyl-CoA + 2 reduced [2Fe-2S]-[ferredoxin] + CO2 + H(+). Catalyzes the ferredoxin-dependent oxidative decarboxylation of arylpyruvates. The protein is Indolepyruvate oxidoreductase subunit IorA (iorA) of Thermococcus kodakarensis (strain ATCC BAA-918 / JCM 12380 / KOD1) (Pyrococcus kodakaraensis (strain KOD1)).